The primary structure comprises 76 residues: Precursor of CEP7 (76 aa).

Positions 1–27 are cleaved as a signal peptide; the sequence is MAKCTLTSLILLLIVLVLIQESHIVEG. The propeptide occupies 28–61; that stretch reads RPLKSSRISNVSKKFAAGNSNLSSKLTTEDHSLD. Residues N37 and N48 are each glycosylated (N-linked (GlcNAc...) asparagine). Residues 49 to 76 form a disordered region; it reads LSSKLTTEDHSLDAFRPTNPGNSPGIGH. Hydroxyproline occurs at positions 65, 68, and 72.

The protein belongs to the C-terminally encoded plant signaling peptide (CEP) family. As to quaternary structure, interacts with CEP receptors (e.g. CEPR1 and CEPR2). Post-translationally, the mature small signaling peptide is generated by proteolytic processing of the longer precursor.

The protein localises to the secreted. It is found in the extracellular space. The protein resides in the apoplast. In terms of biological role, extracellular signaling peptide that may regulate primary root growth rate and systemic nitrogen (N)-demand signaling. Mediates up-regulation of genes involved in N uptake and assimilation pathways. The polypeptide is Precursor of CEP7 (Arabidopsis thaliana (Mouse-ear cress)).